The chain runs to 48 residues: Small, acid-soluble spore protein G (48 aa).

Residues 1-16 (MSENRHENEENRRDAA) are compositionally biased toward basic and acidic residues. A disordered region spans residues 1 to 48 (MSENRHENEENRRDAAVAKVQNSGNAKVVVSVNTDQDQAQAQSQDGED). Residues 35-48 (DQDQAQAQSQDGED) show a composition bias toward low complexity.

The sequence is that of Small, acid-soluble spore protein G (sspG) from Bacillus subtilis (strain 168).